A 389-amino-acid polypeptide reads, in one-letter code: Phosphopentomutase (389 aa).

Positions 10, 282, 287, 323, 324, and 335 each coordinate Mn(2+).

It belongs to the phosphopentomutase family. The cofactor is Mn(2+).

Its subcellular location is the cytoplasm. It catalyses the reaction 2-deoxy-alpha-D-ribose 1-phosphate = 2-deoxy-D-ribose 5-phosphate. The enzyme catalyses alpha-D-ribose 1-phosphate = D-ribose 5-phosphate. The protein operates within carbohydrate degradation; 2-deoxy-D-ribose 1-phosphate degradation; D-glyceraldehyde 3-phosphate and acetaldehyde from 2-deoxy-alpha-D-ribose 1-phosphate: step 1/2. In terms of biological role, isomerase that catalyzes the conversion of deoxy-ribose 1-phosphate (dRib-1-P) and ribose 1-phosphate (Rib-1-P) to deoxy-ribose 5-phosphate (dRib-5-P) and ribose 5-phosphate (Rib-5-P), respectively. The protein is Phosphopentomutase of Clostridium kluyveri (strain NBRC 12016).